The following is a 95-amino-acid chain: uncharacterized protein (95 aa).

Positions 46 to 68 are disordered; that stretch reads GDRGTNGRTEAEHDGIPHSRKKV.

This is an uncharacterized protein from Schizosaccharomyces pombe (strain 972 / ATCC 24843) (Fission yeast).